The chain runs to 428 residues: Enolase (428 aa).

A (2R)-2-phosphoglycerate-binding site is contributed by Gln167. Catalysis depends on Glu209, which acts as the Proton donor. Mg(2+) is bound by residues Asp246, Glu288, and Asp315. Residues Lys340, Arg369, Ser370, and Lys391 each coordinate (2R)-2-phosphoglycerate. Lys340 functions as the Proton acceptor in the catalytic mechanism.

This sequence belongs to the enolase family. Component of the RNA degradosome, a multiprotein complex involved in RNA processing and mRNA degradation. The cofactor is Mg(2+).

The protein resides in the cytoplasm. The protein localises to the secreted. It is found in the cell surface. The catalysed reaction is (2R)-2-phosphoglycerate = phosphoenolpyruvate + H2O. Its pathway is carbohydrate degradation; glycolysis; pyruvate from D-glyceraldehyde 3-phosphate: step 4/5. In terms of biological role, catalyzes the reversible conversion of 2-phosphoglycerate (2-PG) into phosphoenolpyruvate (PEP). It is essential for the degradation of carbohydrates via glycolysis. The polypeptide is Enolase (Pseudomonas savastanoi pv. phaseolicola (strain 1448A / Race 6) (Pseudomonas syringae pv. phaseolicola (strain 1448A / Race 6))).